Here is a 255-residue protein sequence, read N- to C-terminus: MVKVGVFGANGRVGKLLIDDLKLSENISLSSVYVRNSLDFSIDPSVLVSTDMKSFLNACDIVIDFSLPEACEDLLEAAIKTPKPLVIGTTGLNAHQLNLLKQASENMPILYATNMSLGVALLNKLVHQASAALKGFDIEIVEMHHKHKKDAPSGTALTLAHSAASGRGLDLNKVRVSGRDGNIGERNSDEIAVMALRGGDIVGRHTVGFYNDGEFIELNHTATSRNTFSKGAIRAASWLAKKEAGLYSISDCLEI.

NAD(+) contacts are provided by residues 8–13 (GANGRV), 88–90 (GTT), and 112–115 (ATNM). Histidine 144 acts as the Proton donor/acceptor in catalysis. Histidine 145 is a binding site for (S)-2,3,4,5-tetrahydrodipicolinate. Lysine 148 acts as the Proton donor in catalysis. Residue 154 to 155 (GT) participates in (S)-2,3,4,5-tetrahydrodipicolinate binding.

It belongs to the DapB family.

The protein resides in the cytoplasm. The catalysed reaction is (S)-2,3,4,5-tetrahydrodipicolinate + NAD(+) + H2O = (2S,4S)-4-hydroxy-2,3,4,5-tetrahydrodipicolinate + NADH + H(+). The enzyme catalyses (S)-2,3,4,5-tetrahydrodipicolinate + NADP(+) + H2O = (2S,4S)-4-hydroxy-2,3,4,5-tetrahydrodipicolinate + NADPH + H(+). It participates in amino-acid biosynthesis; L-lysine biosynthesis via DAP pathway; (S)-tetrahydrodipicolinate from L-aspartate: step 4/4. Its function is as follows. Catalyzes the conversion of 4-hydroxy-tetrahydrodipicolinate (HTPA) to tetrahydrodipicolinate. The protein is 4-hydroxy-tetrahydrodipicolinate reductase of Sulfurimonas denitrificans (strain ATCC 33889 / DSM 1251) (Thiomicrospira denitrificans (strain ATCC 33889 / DSM 1251)).